A 559-amino-acid polypeptide reads, in one-letter code: MATANIELQSAAEHEAHPTNFIRQIIDEDLATGKHHNVYTRFPPEPNGYLHIGHAKSICLNFGIAQDYHGKCNLRFDDTNPVKEDVEYVDSIKQDVEWLGFNWEGEPRYASDYFDQLYGYAVELIEKGLAYVDELSPEEMREYRGTLTEAGKNSPYRERSVAENLALFEKMRNGEFAEGKACLRAKIDMASPFMVMRDPVIYRVKFASHHQTGDKWCIYPMYDFTHCISDAIERITHSLCTLEFQDNRRLYDWVLEHISIERPLPHQYEFSRLNLEGTLTSKRKLLKLVEEGAVDGWDDPRMPTISGLRRRGYTPASLREFCRRIGVTKQDNVVEFSALESCIRDDLNINAPRAMAVINPLKVIIENFETPETLTMPNHPNREEMGTRQVQLTKELYIDQADFREEANKQYKRLVLGKEVRLRNAYIIKAERVEKDAEGNIVCVYCSYDPETLGKNPSDGRKVKGVIQWVSATDCLPAEFRQYSRLFTMPNPGSEEDIIAAINPQSLVVRQGFVERSVANALSEKAYQFEREGYYCADSKDSRPDHLVFNLTVSLKEGF.

The 'HIGH' region motif lies at 44–54 (PEPNGYLHIGH). Residues 45 to 47 (EPN) and 51 to 57 (HIGHAKS) contribute to the ATP site. L-glutamine-binding residues include aspartate 77 and tyrosine 222. ATP-binding positions include threonine 241 and 272–273 (RL). The 'KMSKS' region signature appears at 279–283 (LTSKR).

Belongs to the class-I aminoacyl-tRNA synthetase family. In terms of assembly, monomer.

The protein resides in the cytoplasm. The enzyme catalyses tRNA(Gln) + L-glutamine + ATP = L-glutaminyl-tRNA(Gln) + AMP + diphosphate. In Actinobacillus succinogenes (strain ATCC 55618 / DSM 22257 / CCUG 43843 / 130Z), this protein is Glutamine--tRNA ligase.